The chain runs to 349 residues: MKYFFIIALLLSSLYSQTIKDISNIIGIRENQLIGYGLIVGLAGTGDKSKFTMQSLQNLLRNSYIKIPAGSINSKNIAAVMVTADLPPFARQGDKIKVNISTIGDAKSVDHGELLITQLKGVDGNVYALAQGTIVANENNKTTGFIYDGATVENEINFDLQSEDSIQLSLLKNSAKNADLIETKINDTFGKKLATALDTRTIDVKKPDGMSIVKFISLVQNIELESSFKKKLIIDMNRESILAGGDIVIDPVTIARDTFTIRINKTGLGEVDWNNPTINTGVDIGDDVRIADKPVIDINNAMINTKNPPTVADLVRSMKVMKLPMKEIIDTLKMIKDMGAIDVDIELRE.

Residues 1 to 16 (MKYFFIIALLLSSLYS) form the signal peptide.

Belongs to the FlgI family. The basal body constitutes a major portion of the flagellar organelle and consists of four rings (L,P,S, and M) mounted on a central rod.

The protein localises to the periplasm. Its subcellular location is the bacterial flagellum basal body. Assembles around the rod to form the L-ring and probably protects the motor/basal body from shearing forces during rotation. This is Flagellar P-ring protein from Aliarcobacter butzleri (strain RM4018) (Arcobacter butzleri).